A 487-amino-acid chain; its full sequence is L-asparagine permease 2 (487 aa).

A run of 12 helical transmembrane segments spans residues 26-46 (QLQM…GAGG), 50-70 (SAGP…FLIL), 98-118 (VAFV…IVDT), 133-153 (PIPQ…MNLI), 163-183 (FWAS…GTVF), 214-234 (IVLV…VGIA), 256-276 (IACF…YTAY), 290-310 (IGID…ALSS), 341-361 (TGVP…GIIL), 369-389 (AFEI…ATIV), 414-434 (SPFS…LMYF), and 440-460 (PWMI…WYLV).

It belongs to the amino acid-polyamine-organocation (APC) superfamily. Amino acid transporter (AAT) (TC 2.A.3.1) family.

Its subcellular location is the cell membrane. Dual function in both nitrogen assimilation and in protection against acid stress during infection. Involved in asparagine uptake. The polypeptide is L-asparagine permease 2 (ansP2) (Mycobacterium bovis (strain ATCC BAA-935 / AF2122/97)).